Consider the following 108-residue polypeptide: Monothiol bacilliredoxin BrxC (108 aa).

An S-bacillithiol cysteine disulfide modification is found at C31.

In terms of assembly, interacts with AbrB, BdhA, Bdr, BrxB, FolD, GapA, GapB, GatA, PfkA, PyrAA, PyrAB, PyrE, PyrG, PyrH, RpsB, RpsK, RpsL, SalA, SucC, Tuf and YtsJ. Cys can react with bacillithiol (BSH) to form mixed disulfides. S-bacillithiolation protects Cys residues against overoxidation by acting as a redox switch in response to oxidative stress.

Functionally, S-bacillithiolation is the formation of mixed disulfide bonds between protein thiols and the general thiol reductant bacillithiol (BSH) under oxidative stress. BSH is an equivalent of glutathione (GSH) in Firmicutes. This protein is a monothiol bacilliredoxin, which debacillithiolates (removes BSH) the S-bacillithiolated glyceraldehyde-3-phosphate dehydrogenases (GAPDHs) GapA and GapB in vivo and probably a number of other oxidized cytosolic proteins. Debacillithiolates the S-bacillithiolated Bdr (Bdr-SSB) and BrxB (BrxB-SSB) in vitro. Involved in maintaining redox homeostasis in response to disulfide stress conditions. This chain is Monothiol bacilliredoxin BrxC, found in Bacillus subtilis (strain 168).